The chain runs to 105 residues: POU domain, class 3, transcription factor 3 (105 aa).

The POU-specific domain occupies 1–49; it reads QADVGLALGTLYGNVFSQTTICRFEALQLSFKNMCKLKPLLNKWLEEAD. The homeobox DNA-binding region spans 67 to 105; sequence KRKKRTSIEVSVKGALESHFLKCPKPAAQEITTLADSLQ.

This sequence belongs to the POU transcription factor family. Class-3 subfamily.

The protein resides in the nucleus. This is POU domain, class 3, transcription factor 3 (pou3f3) from Xenopus laevis (African clawed frog).